The sequence spans 60 residues: UPF0434 protein ECA2555 (60 aa).

It belongs to the UPF0434 family.

The polypeptide is UPF0434 protein ECA2555 (Pectobacterium atrosepticum (strain SCRI 1043 / ATCC BAA-672) (Erwinia carotovora subsp. atroseptica)).